The primary structure comprises 1586 residues: Pentafunctional AROM polypeptide (1586 aa).

The segment at 1 to 384 (MSEPTKISIL…HEPKASVVSN (384 aa)) is 3-dehydroquinate synthase. Residues 44–46 (DTN), 81–84 (ESSK), 114–116 (GGV), and Asp-119 contribute to the NAD(+) site. Residue Arg-130 coordinates 7-phospho-2-dehydro-3-deoxy-D-arabino-heptonate. 139–140 (TT) is a binding site for NAD(+). 2 residues coordinate 7-phospho-2-dehydro-3-deoxy-D-arabino-heptonate: Asp-146 and Lys-152. Lys-161 serves as a coordination point for NAD(+). Asn-162 contacts 7-phospho-2-dehydro-3-deoxy-D-arabino-heptonate. Residues 179 to 182 (FLET) and Asn-190 contribute to the NAD(+) site. Glu-194 contacts Zn(2+). Residues 194–197 (EVIK) and Lys-250 each bind 7-phospho-2-dehydro-3-deoxy-D-arabino-heptonate. Glu-260 (proton acceptor; for 3-dehydroquinate synthase activity) is an active-site residue. Residues 264–268 (RNLLN) and His-271 each bind 7-phospho-2-dehydro-3-deoxy-D-arabino-heptonate. His-271 serves as a coordination point for Zn(2+). His-275 (proton acceptor; for 3-dehydroquinate synthase activity) is an active-site residue. Residues His-287 and Lys-356 each contribute to the 7-phospho-2-dehydro-3-deoxy-D-arabino-heptonate site. His-287 contributes to the Zn(2+) binding site. The segment at 397–842 (VHPGVPKSLN…WDALKQMFSV (446 aa)) is EPSP synthase. Cys-824 functions as the For EPSP synthase activity in the catalytic mechanism. Residues 864-1056 (SASVFIIGMR…KKKKHSFFVS (193 aa)) form a shikimate kinase region. An ATP-binding site is contributed by 871–878 (GMRGAGKT). The segment at 1057-1277 (LTLPDVEPSG…AAPGQLSAAE (221 aa)) is 3-dehydroquinase. The active-site Proton acceptor; for 3-dehydroquinate dehydratase activity is the His-1180. Lys-1208 serves as the catalytic Schiff-base intermediate with substrate; for 3-dehydroquinate dehydratase activity. The tract at residues 1290–1586 (AQKFAIFGSP…SKHLDYFLSF (297 aa)) is shikimate dehydrogenase.

The protein in the N-terminal section; belongs to the sugar phosphate cyclases superfamily. Dehydroquinate synthase family. It in the 2nd section; belongs to the EPSP synthase family. This sequence in the 3rd section; belongs to the shikimate kinase family. In the 4th section; belongs to the type-I 3-dehydroquinase family. The protein in the C-terminal section; belongs to the shikimate dehydrogenase family. Homodimer. It depends on Zn(2+) as a cofactor.

The protein localises to the cytoplasm. It carries out the reaction 7-phospho-2-dehydro-3-deoxy-D-arabino-heptonate = 3-dehydroquinate + phosphate. The enzyme catalyses 3-dehydroquinate = 3-dehydroshikimate + H2O. The catalysed reaction is shikimate + NADP(+) = 3-dehydroshikimate + NADPH + H(+). It catalyses the reaction shikimate + ATP = 3-phosphoshikimate + ADP + H(+). It carries out the reaction 3-phosphoshikimate + phosphoenolpyruvate = 5-O-(1-carboxyvinyl)-3-phosphoshikimate + phosphate. It functions in the pathway metabolic intermediate biosynthesis; chorismate biosynthesis; chorismate from D-erythrose 4-phosphate and phosphoenolpyruvate: step 2/7. It participates in metabolic intermediate biosynthesis; chorismate biosynthesis; chorismate from D-erythrose 4-phosphate and phosphoenolpyruvate: step 3/7. The protein operates within metabolic intermediate biosynthesis; chorismate biosynthesis; chorismate from D-erythrose 4-phosphate and phosphoenolpyruvate: step 4/7. Its pathway is metabolic intermediate biosynthesis; chorismate biosynthesis; chorismate from D-erythrose 4-phosphate and phosphoenolpyruvate: step 5/7. It functions in the pathway metabolic intermediate biosynthesis; chorismate biosynthesis; chorismate from D-erythrose 4-phosphate and phosphoenolpyruvate: step 6/7. Functionally, the AROM polypeptide catalyzes 5 consecutive enzymatic reactions in prechorismate polyaromatic amino acid biosynthesis. This Penicillium rubens (strain ATCC 28089 / DSM 1075 / NRRL 1951 / Wisconsin 54-1255) (Penicillium chrysogenum) protein is Pentafunctional AROM polypeptide.